Reading from the N-terminus, the 239-residue chain is MSKTKPLSADEISRLEALIGYEFKEKARLDRALTHASARSAAAGNYERLEFLGDRVLGLCVAELLFSTFRNASEGELSVRLNQLVSAESCAAIGDEMGLHNFIRTGSDVKKLTGKAMLNVRADVVESLIATLYLDGGLEASRKFILKYWQGRATSVDAGRRDAKTELQEWAHARFAATPAYRVDDRSGPDHDPSFTVTVEIPGVKPETGVERSKRAAEQVAATRLLEREGVWRKSPTGN.

Positions 12–137 constitute an RNase III domain; the sequence is ISRLEALIGY…LIATLYLDGG (126 aa). E50 serves as a coordination point for Mg(2+). D54 is an active-site residue. 2 residues coordinate Mg(2+): D123 and E126. The active site involves E126. Residues 162–231 form the DRBM domain; the sequence is DAKTELQEWA…ATRLLEREGV (70 aa).

This sequence belongs to the ribonuclease III family. In terms of assembly, homodimer. Mg(2+) serves as cofactor.

Its subcellular location is the cytoplasm. It catalyses the reaction Endonucleolytic cleavage to 5'-phosphomonoester.. Its function is as follows. Digests double-stranded RNA. Involved in the processing of primary rRNA transcript to yield the immediate precursors to the large and small rRNAs (23S and 16S). Processes some mRNAs, and tRNAs when they are encoded in the rRNA operon. Processes pre-crRNA and tracrRNA of type II CRISPR loci if present in the organism. This Agrobacterium fabrum (strain C58 / ATCC 33970) (Agrobacterium tumefaciens (strain C58)) protein is Ribonuclease 3.